Reading from the N-terminus, the 344-residue chain is DnaJ homolog subfamily C member 25 (344 aa).

A helical transmembrane segment spans residues 5–25 (WVLLVALSVLFLSGRAGALTE). Positions 33–108 (VCYDVLGVSR…ETRKDYDYML (76 aa)) constitute a J domain. The next 2 membrane-spanning stretches (helical) occupy residues 134-154 (IVILVSVCAVSIFQYYSWWSS) and 228-248 (ILLFQIILFPYYMFKYISWYV).

The protein belongs to the DNAJC25 family.

It is found in the membrane. This is DnaJ homolog subfamily C member 25 (dnajc25) from Xenopus laevis (African clawed frog).